The chain runs to 629 residues: Chaperone protein HtpG (629 aa).

The interval 1 to 336 is a; substrate-binding; that stretch reads MSSTENNGTA…TEDLSLNVSR (336 aa). Residues 337–549 are b; that stretch reads EMVQSSPVMA…KDAIDSQLER (213 aa). The c stretch occupies residues 550-629; the sequence is MMKMMNTPMP…ELIEAATLTR (80 aa).

The protein belongs to the heat shock protein 90 family. In terms of assembly, homodimer.

The protein localises to the cytoplasm. Functionally, molecular chaperone. Has ATPase activity. The polypeptide is Chaperone protein HtpG (Chlorobium chlorochromatii (strain CaD3)).